The following is a 488-amino-acid chain: 3-octaprenyl-4-hydroxybenzoate carboxy-lyase (488 aa).

Mn(2+) is bound at residue Asn-172. Prenylated FMN is bound by residues 175–177 (IYR), 189–191 (RWL), and 194–195 (RG). Position 238 (Glu-238) interacts with Mn(2+). Asp-287 functions as the Proton donor in the catalytic mechanism.

It belongs to the UbiD family. Homohexamer. Requires prenylated FMN as cofactor. It depends on Mn(2+) as a cofactor.

Its subcellular location is the cell membrane. It carries out the reaction a 4-hydroxy-3-(all-trans-polyprenyl)benzoate + H(+) = a 2-(all-trans-polyprenyl)phenol + CO2. Its pathway is cofactor biosynthesis; ubiquinone biosynthesis. Catalyzes the decarboxylation of 3-octaprenyl-4-hydroxy benzoate to 2-octaprenylphenol, an intermediate step in ubiquinone biosynthesis. The sequence is that of 3-octaprenyl-4-hydroxybenzoate carboxy-lyase from Pseudomonas syringae pv. syringae (strain B728a).